The primary structure comprises 239 residues: Ribosomal RNA small subunit methyltransferase G (239 aa).

S-adenosyl-L-methionine is bound by residues Gly77, Phe82, 128–129, and Arg147; that span reads AE.

This sequence belongs to the methyltransferase superfamily. RNA methyltransferase RsmG family.

It is found in the cytoplasm. Its function is as follows. Specifically methylates the N7 position of guanine in position 535 of 16S rRNA. This is Ribosomal RNA small subunit methyltransferase G from Bacillus cereus (strain AH187).